Here is a 203-residue protein sequence, read N- to C-terminus: Translation machinery-associated protein 16 (203 aa).

A disordered region spans residues M1–K39. Residue S9 is modified to ADP-ribosylserine. A compositionally biased stretch (basic and acidic residues) spans R29–K39.

The protein belongs to the TMA16 family. In terms of assembly, associates with pre-60S ribosomal particles.

The protein resides in the nucleus. Functionally, involved in the biogenesis of the 60S ribosomal subunit in the nucleus. This chain is Translation machinery-associated protein 16 (TMA16), found in Homo sapiens (Human).